An 865-amino-acid chain; its full sequence is Taste receptor type 1 member 3 (865 aa).

A signal peptide spans Met1 to Gly24. The Extracellular portion of the chain corresponds to Ala25 to Leu573. N-linked (GlcNAc...) asparagine glycosylation is found at Asn134 and Asn267. The helical transmembrane segment at Leu574–Leu594 threads the bilayer. The Cytoplasmic segment spans residues Trp595–Gly606. The chain crosses the membrane as a helical span at residues Gly607–Phe627. Residues Pro628–Leu642 lie on the Extracellular side of the membrane. A helical membrane pass occupies residues Phe643 to Val663. The Cytoplasmic segment spans residues Gly664–Trp685. Residues Leu686 to Phe706 form a helical membrane-spanning segment. Over Pro707–Ser732 the chain is Extracellular. A helical transmembrane segment spans residues Phe733–Leu753. Over Val754–Arg765 the chain is Cytoplasmic. Residues Gly766 to Ala786 form a helical membrane-spanning segment. At Asn787–Pro794 the chain is on the extracellular side. The helical transmembrane segment at Ala795–Pro815 threads the bilayer. At Lys816–Gln865 the chain is on the cytoplasmic side. Residues Gln840 to Gln865 are disordered. The span at Gly852–Gln865 shows a compositional bias: polar residues.

It belongs to the G-protein coupled receptor 3 family. TAS1R subfamily. As to quaternary structure, forms homodimers or a heterodimer with TAS1R1. As to expression, expressed in taste buds.

It is found in the cell membrane. Putative taste receptor. TAS1R1/TAS1R3 responds to the umami taste stimulus (the taste of monosodium glutamate). This chain is Taste receptor type 1 member 3 (TAS1R3), found in Felis catus (Cat).